Reading from the N-terminus, the 260-residue chain is GTP cyclohydrolase FolE2 (260 aa).

Belongs to the GTP cyclohydrolase IV family.

The enzyme catalyses GTP + H2O = 7,8-dihydroneopterin 3'-triphosphate + formate + H(+). It functions in the pathway cofactor biosynthesis; 7,8-dihydroneopterin triphosphate biosynthesis; 7,8-dihydroneopterin triphosphate from GTP: step 1/1. Converts GTP to 7,8-dihydroneopterin triphosphate. The chain is GTP cyclohydrolase FolE2 from Desulfovibrio desulfuricans (strain ATCC 27774 / DSM 6949 / MB).